A 258-amino-acid chain; its full sequence is Thiamine thiazole synthase (258 aa).

Residues S36, 55–56 (ER), G63, V127, and 153–155 (HVD) each bind NAD(+). Fe cation contacts are provided by D155 and H170. M224 contributes to the NAD(+) binding site. R234 serves as a coordination point for glycine.

This sequence belongs to the THI4 family. As to quaternary structure, homooctamer; tetramer of dimers. Fe(2+) is required as a cofactor.

It catalyses the reaction hydrogen sulfide + glycine + NAD(+) = ADP-5-ethyl-4-methylthiazole-2-carboxylate + nicotinamide + 3 H2O + H(+). It functions in the pathway cofactor biosynthesis; thiamine diphosphate biosynthesis. Involved in the biosynthesis of the thiazole moiety of thiamine. Catalyzes the conversion of NAD and glycine to adenosine diphosphate 5-(2-hydroxyethyl)-4-methylthiazole-2-carboxylate (ADT), an adenylated thiazole intermediate, using free sulfide as a source of sulfur. This Desulfosudis oleivorans (strain DSM 6200 / JCM 39069 / Hxd3) (Desulfococcus oleovorans) protein is Thiamine thiazole synthase.